We begin with the raw amino-acid sequence, 163 residues long: E1B protein, small T-antigen (163 aa).

Belongs to the adenoviridae E1B 19 kDa protein family.

It is found in the host cell membrane. The protein resides in the host nucleus envelope. Its subcellular location is the host nucleus lamina. Functionally, putative adenovirus Bcl-2 homolog that inhibits apoptosis induced by TNF or FAS pathways, as well as p53-mediated apoptosis. Without E1B 19K function, virus production is compromised because of premature death of host cell. Interacts with Bax protein in cell lysates. This chain is E1B protein, small T-antigen, found in Human adenovirus A serotype 12 (HAdV-12).